Consider the following 118-residue polypeptide: Aspartate 1-decarboxylase (118 aa).

Ser-25 serves as the catalytic Schiff-base intermediate with substrate; via pyruvic acid. Ser-25 is modified (pyruvic acid (Ser)). Position 57 (Thr-57) interacts with substrate. Catalysis depends on Tyr-58, which acts as the Proton donor. 73 to 75 lines the substrate pocket; that stretch reads GAA.

The protein belongs to the PanD family. Heterooctamer of four alpha and four beta subunits. The cofactor is pyruvate. Post-translationally, is synthesized initially as an inactive proenzyme, which is activated by self-cleavage at a specific serine bond to produce a beta-subunit with a hydroxyl group at its C-terminus and an alpha-subunit with a pyruvoyl group at its N-terminus.

The protein localises to the cytoplasm. The enzyme catalyses L-aspartate + H(+) = beta-alanine + CO2. Its pathway is cofactor biosynthesis; (R)-pantothenate biosynthesis; beta-alanine from L-aspartate: step 1/1. Functionally, catalyzes the pyruvoyl-dependent decarboxylation of aspartate to produce beta-alanine. This Syntrophomonas wolfei subsp. wolfei (strain DSM 2245B / Goettingen) protein is Aspartate 1-decarboxylase.